A 251-amino-acid chain; its full sequence is DNA-directed RNA polymerase III subunit RPC7 (251 aa).

The disordered stretch occupies residues 186–251 (DDASTGDGAA…EEDPNEEAAF (66 aa)). The residue at position 189 (S189) is a Phosphoserine. Acidic residues-rich tracts occupy residues 203–225 (GEDDDLADDDFEEDEDEEDDDDY) and 234–251 (GDDDDYGDEEDPNEEAAF).

It belongs to the eukaryotic RPC7 RNA polymerase subunit family. In terms of assembly, component of the RNA polymerase III (Pol III) complex consisting of 17 subunits.

It localises to the nucleus. Functionally, DNA-dependent RNA polymerase catalyzes the transcription of DNA into RNA using the four ribonucleoside triphosphates as substrates. Specific peripheric component of RNA polymerase III which synthesizes small RNAs, such as 5S rRNA and tRNAs. C31 is involved in the formation of the initiation complex. In Saccharomyces cerevisiae (strain ATCC 204508 / S288c) (Baker's yeast), this protein is DNA-directed RNA polymerase III subunit RPC7 (RPC31).